The sequence spans 194 residues: MAEKIDINRIQRDMFIEYKGEPYRVVDYDHVKPGKGQAFVRVKAKNMNTGNAIEITYKSSDSIELADFEQVFAEFSYKDADEYHFLTQNTHEMISINAEDIKEEAKFLKEGMTVVVFIYKNKPIGIELPKAVELEVIETDPGFKGDTAAGGSKPAKLETGAVIQVPFFINEGDIVKVDTRTGQYLERLDRAQKK.

Belongs to the elongation factor P family.

The protein resides in the cytoplasm. The protein operates within protein biosynthesis; polypeptide chain elongation. In terms of biological role, involved in peptide bond synthesis. Stimulates efficient translation and peptide-bond synthesis on native or reconstituted 70S ribosomes in vitro. Probably functions indirectly by altering the affinity of the ribosome for aminoacyl-tRNA, thus increasing their reactivity as acceptors for peptidyl transferase. The sequence is that of Elongation factor P from Hydrogenobaculum sp. (strain Y04AAS1).